Reading from the N-terminus, the 209-residue chain is V-type ATP synthase subunit D (209 aa).

Belongs to the V-ATPase D subunit family.

Its function is as follows. Produces ATP from ADP in the presence of a proton gradient across the membrane. This Chlamydia pneumoniae (Chlamydophila pneumoniae) protein is V-type ATP synthase subunit D (atpD).